Consider the following 87-residue polypeptide: Kawaguchipeptin peptide (87 aa).

The propeptide occupies 1–33; sequence MKNPTLLPKLTAPVERPAVTSSDLKQASSVDAA. Residue Trp-34 is the site of 3'-prenyl-2',N2-cyclotryptophan; partial attachment. Residues 34 to 44 constitute a cross-link (cyclopeptide (Trp-Pro)); it reads WLNGDNNWSTP. Position 35 is a D-leucine; partial (Leu-35). Trp-41 is lipidated: 3'-prenyl-2',N2-cyclotryptophan; partial. Positions 45 to 51 are excised as a propeptide; that stretch reads FAGVNAA. Trp-52 is lipidated: 3'-prenyl-2',N2-cyclotryptophan; partial. The segment at residues 52 to 62 is a cross-link (cyclopeptide (Trp-Pro)); the sequence is WLNGDNNWSTP. Leu-53 is subject to D-leucine; partial. A lipid anchor (3'-prenyl-2',N2-cyclotryptophan; partial) is attached at Trp-59. Residues 63-69 constitute a propeptide that is removed on maturation; sequence FAGVNAA. Trp-70 carries 3'-prenyl-2',N2-cyclotryptophan; partial lipidation. The segment at residues 70 to 80 is a cross-link (cyclopeptide (Trp-Pro)); that stretch reads WLNGDNNWSTP. D-leucine; partial is present on Leu-71. Trp-77 is lipidated: 3'-prenyl-2',N2-cyclotryptophan; partial. Positions 81-87 are excised as a propeptide; that stretch reads FAADGAE.

In terms of processing, kawaguchipeptin A contains a D-Leu and 2 prenylated Trp, whereas kawaguchipeptin B only contains unmodified amino acids. Kawaguchipeptin A is prenylated in vivo. Upon expression in E.coli of the whole operon, Trp residues are prenylated by C-prenyltransferase KgpF. Prenylation by KgpF is likely the last enzymatic step in the biosynthetic maturation of kawaguchipeptin A.

In terms of biological role, both kawaguchipeptin A and B, which only differ by post-translational modifications, have antibacterial activities, since they inhibit the growth of the Gram-positive bacterium S.aureus at a concentration of 1 ug/mL. The polypeptide is Kawaguchipeptin peptide (Microcystis aeruginosa (strain NIES-88 / KW-MA1-3)).